Here is a 112-residue protein sequence, read N- to C-terminus: Prothymosin alpha-B (112 aa).

The disordered stretch occupies residues 1–112; sequence MSDTAVDASV…TKKQKTDEDD (112 aa). A compositionally biased stretch (basic and acidic residues) spans 9–35; it reads SVEKSTKDLKAKEKEVVEEAENGKDKP. 2 stretches are compositionally biased toward acidic residues: residues 41–83 and 92–101; these read ENEE…DEVE and EDDEDDDDDV. Positions 102 to 112 are enriched in basic and acidic residues; it reads ETKKQKTDEDD.

Belongs to the pro/parathymosin family.

It localises to the nucleus. The polypeptide is Prothymosin alpha-B (ptma-b) (Xenopus laevis (African clawed frog)).